The following is a 328-amino-acid chain: DNA-directed RNA polymerase subunit alpha (328 aa).

Residues 1–230 (MSNHGLQMPE…DHVSFFIQLE (230 aa)) form an alpha N-terminal domain (alpha-NTD) region. An alpha C-terminal domain (alpha-CTD) region spans residues 248–328 (RIRELLAQPV…EEYLEEKKAS (81 aa)).

The protein belongs to the RNA polymerase alpha chain family. As to quaternary structure, homodimer. The RNAP catalytic core consists of 2 alpha, 1 beta, 1 beta' and 1 omega subunit. When a sigma factor is associated with the core the holoenzyme is formed, which can initiate transcription.

It catalyses the reaction RNA(n) + a ribonucleoside 5'-triphosphate = RNA(n+1) + diphosphate. DNA-dependent RNA polymerase catalyzes the transcription of DNA into RNA using the four ribonucleoside triphosphates as substrates. This Salinibacter ruber (strain DSM 13855 / M31) protein is DNA-directed RNA polymerase subunit alpha.